The primary structure comprises 505 residues: Probable alpha-L-arabinofuranosidase C (505 aa).

N-linked (GlcNAc...) asparagine glycosylation is found at asparagine 152, asparagine 269, and asparagine 438.

Belongs to the glycosyl hydrolase 51 family.

It localises to the secreted. It catalyses the reaction Hydrolysis of terminal non-reducing alpha-L-arabinofuranoside residues in alpha-L-arabinosides.. Its pathway is glycan metabolism; L-arabinan degradation. Alpha-L-arabinofuranosidase involved in the degradation of arabinoxylan, a major component of plant hemicellulose. Acts only on small linear 1,5-alpha-linked L-arabinofuranosyl oligosaccharides. The protein is Probable alpha-L-arabinofuranosidase C (abfC) of Aspergillus clavatus (strain ATCC 1007 / CBS 513.65 / DSM 816 / NCTC 3887 / NRRL 1 / QM 1276 / 107).